Here is a 628-residue protein sequence, read N- to C-terminus: Chaperone protein HtpG (628 aa).

The tract at residues 1–337 (MSEKKYTFET…SADLPLNVSR (337 aa)) is a; substrate-binding. A b region spans residues 338–554 (EILQHNKVID…DYGMSLHMQK (217 aa)). Positions 555–628 (MMEEAGQSFM…FVKLVNKYIR (74 aa)) are c.

This sequence belongs to the heat shock protein 90 family. As to quaternary structure, homodimer.

Its subcellular location is the cytoplasm. Functionally, molecular chaperone. Has ATPase activity. This Francisella tularensis subsp. tularensis (strain WY96-3418) protein is Chaperone protein HtpG.